The sequence spans 195 residues: DnaJ homolog subfamily C member 5 (195 aa).

The region spanning 13 to 82 is the J domain; the sequence is GDSLYIVLGL…RNIYDKYGSL (70 aa). The disordered stretch occupies residues 162–195; the sequence is DMEKEGDGAIVVQPTSATETTQLTSDSHPSYHTE. Polar residues predominate over residues 174–189; the sequence is QPTSATETTQLTSDSH.

Palmitoylated. Palmitoylation occurs probably in the cysteine-rich domain and regulates DNAJC5 stable membrane attachment.

It is found in the cytoplasm. Its subcellular location is the cytosol. The protein resides in the membrane. It localises to the cytoplasmic vesicle. The protein localises to the secretory vesicle. It is found in the chromaffin granule membrane. Its subcellular location is the melanosome. The protein resides in the cell membrane. Its function is as follows. May have an important role in presynaptic function. May be involved in calcium-dependent neurotransmitter release at nerve endings. The chain is DnaJ homolog subfamily C member 5 from Tetronarce californica (Pacific electric ray).